Here is a 140-residue protein sequence, read N- to C-terminus: ATP synthase epsilon chain (140 aa).

Belongs to the ATPase epsilon chain family. In terms of assembly, F-type ATPases have 2 components, CF(1) - the catalytic core - and CF(0) - the membrane proton channel. CF(1) has five subunits: alpha(3), beta(3), gamma(1), delta(1), epsilon(1). CF(0) has three main subunits: a, b and c.

It localises to the cell inner membrane. Produces ATP from ADP in the presence of a proton gradient across the membrane. This is ATP synthase epsilon chain from Xanthomonas oryzae pv. oryzae (strain MAFF 311018).